Reading from the N-terminus, the 321-residue chain is Small ribosomal subunit biogenesis GTPase RsgA (321 aa).

Residues Gln-89–Pro-248 enclose the CP-type G domain. Residues Thr-138–Asp-141 and Gly-190–Ser-198 each bind GTP. Zn(2+) contacts are provided by Cys-273, Cys-278, His-280, and Cys-286.

It belongs to the TRAFAC class YlqF/YawG GTPase family. RsgA subfamily. Monomer. Associates with 30S ribosomal subunit, binds 16S rRNA. It depends on Zn(2+) as a cofactor.

It is found in the cytoplasm. In terms of biological role, one of several proteins that assist in the late maturation steps of the functional core of the 30S ribosomal subunit. Helps release RbfA from mature subunits. May play a role in the assembly of ribosomal proteins into the subunit. Circularly permuted GTPase that catalyzes slow GTP hydrolysis, GTPase activity is stimulated by the 30S ribosomal subunit. This Prochlorococcus marinus (strain MIT 9313) protein is Small ribosomal subunit biogenesis GTPase RsgA.